Consider the following 309-residue polypeptide: Taste receptor type 2 member 8 (309 aa).

Topologically, residues 1–7 (MFSPADN) are extracellular. Residues 8–28 (IFIILITGEFILGILGNGYIA) traverse the membrane as a helical segment. The Cytoplasmic segment spans residues 29-50 (LVNWIDWIKKKKISTVDYILTN). The chain crosses the membrane as a helical span at residues 51–71 (LVIARICLISVMVVNGIVIVL). The Extracellular portion of the chain corresponds to 72 to 82 (NPDVYTKNKQQ). A helical transmembrane segment spans residues 83 to 103 (IVIFTFWTFANYLNMWITTCL). Residues 104–131 (NVFYFLKIASSSHPLFLWLKWKIDMVVH) are Cytoplasmic-facing. Residues 132-152 (WILLGCFAISLLVSLIAAIVL) form a helical membrane-spanning segment. At 153–184 (SCDYRFHAIAKHKRNITEMFHVSKIPYFEPLT) the chain is on the extracellular side. N167 carries N-linked (GlcNAc...) asparagine glycosylation. Residues 185–205 (LFNLFAIVPFIVSLISFFLLV) form a helical membrane-spanning segment. Topologically, residues 206–239 (RSLWRHTKQIKLYATGSRDPSTEVHVRAIKTMTS) are cytoplasmic. Residues 240-260 (FIFFFFLYYISSILMTFSYLM) traverse the membrane as a helical segment. The Extracellular portion of the chain corresponds to 261–266 (TKYKLA). The helical transmembrane segment at 267–287 (VEFGEIAAILYPLGHSLILIV) threads the bilayer. At 288–309 (LNNKLRQTFVRMLTCRKIACMI) the chain is on the cytoplasmic side.

The protein belongs to the G-protein coupled receptor T2R family. In terms of tissue distribution, expressed in subsets of taste receptor cells of the tongue and palate epithelium and exclusively in gustducin-positive cells.

It localises to the membrane. Receptor that may play a role in the perception of bitterness and is gustducin-linked. May play a role in sensing the chemical composition of the gastrointestinal content. The activity of this receptor may stimulate alpha gustducin, mediate PLC-beta-2 activation and lead to the gating of TRPM5. In Homo sapiens (Human), this protein is Taste receptor type 2 member 8 (TAS2R8).